A 302-amino-acid chain; its full sequence is Protein ECM11 (302 aa).

Disordered regions lie at residues Met-1–Gln-67 and Ser-162–Gln-187. A compositionally biased stretch (polar residues) spans Asn-35 to Gly-46. Positions Ala-56–Gln-67 are enriched in basic and acidic residues. Residues Ser-162–Pro-171 are compositionally biased toward polar residues.

Interacts with CDC6.

The protein localises to the nucleus. Functionally, may be involved in cell wall organization and biogenesis. This chain is Protein ECM11 (ECM11), found in Saccharomyces cerevisiae (strain ATCC 204508 / S288c) (Baker's yeast).